Reading from the N-terminus, the 180-residue chain is Small ribosomal subunit protein uS4 (180 aa).

Residues 103–174 form the S4 RNA-binding domain; sequence RRLQTIVYKK…HPERMMIEKA (72 aa).

Belongs to the universal ribosomal protein uS4 family. Part of the 30S ribosomal subunit. Contacts protein S5. The interaction surface between S4 and S5 is involved in control of translational fidelity.

In terms of biological role, one of the primary rRNA binding proteins, it binds directly to 16S rRNA where it nucleates assembly of the body of the 30S subunit. Functionally, with S5 and S12 plays an important role in translational accuracy. The chain is Small ribosomal subunit protein uS4 from Pyrococcus abyssi (strain GE5 / Orsay).